Consider the following 337-residue polypeptide: Glyceraldehyde-3-phosphate dehydrogenase (337 aa).

NAD(+) contacts are provided by residues 12-13 (RI), D34, and R79. D-glyceraldehyde 3-phosphate contacts are provided by residues 150–152 (SCT), T181, 210–211 (TG), and R233. The Nucleophile role is filled by C151. N315 is a binding site for NAD(+).

The protein belongs to the glyceraldehyde-3-phosphate dehydrogenase family. In terms of assembly, homotetramer.

Its subcellular location is the cytoplasm. The catalysed reaction is D-glyceraldehyde 3-phosphate + phosphate + NAD(+) = (2R)-3-phospho-glyceroyl phosphate + NADH + H(+). It participates in carbohydrate degradation; glycolysis; pyruvate from D-glyceraldehyde 3-phosphate: step 1/5. The polypeptide is Glyceraldehyde-3-phosphate dehydrogenase (GPD) (Podospora anserina (Pleurage anserina)).